We begin with the raw amino-acid sequence, 466 residues long: Mitochondrial-processing peptidase subunit beta (466 aa).

His73 serves as a coordination point for Zn(2+). Residue Glu76 is the Proton acceptor of the active site. Zn(2+) contacts are provided by His77 and Glu153.

The protein belongs to the peptidase M16 family. In terms of assembly, heterodimer of mppA (alpha) and mppB (beta) subunits, forming the mitochondrial processing protease (MPP) in which mppA is involved in substrate recognition and binding and mppB is the catalytic subunit. Zn(2+) serves as cofactor.

The protein localises to the mitochondrion matrix. The catalysed reaction is Release of N-terminal transit peptides from precursor proteins imported into the mitochondrion, typically with Arg in position P2.. Binding to mppA is required for catalytic activity. Catalytic subunit of the essential mitochondrial processing protease (MPP), which cleaves the mitochondrial sequence off newly imported precursors proteins. Preferentially, cleaves after an arginine at position P2. This chain is Mitochondrial-processing peptidase subunit beta (mppB), found in Lentinula edodes (Shiitake mushroom).